A 453-amino-acid polypeptide reads, in one-letter code: Nuclear hormone receptor family member nhr-12 (453 aa).

A disordered region spans residues 1-37 (MEQIPQEQKTEPFLASFTTTEKLGTETPTTSITPNTQ). Residues 18–36 (TTTEKLGTETPTTSITPNT) are compositionally biased toward low complexity. The segment at residues 44–119 (KPNCAVCNEV…VGMNPECVQN (76 aa)) is a DNA-binding region (nuclear receptor). NR C4-type zinc fingers lie at residues 47 to 67 (CAVC…CRAC) and 83 to 107 (CRAG…YDKC). An NR LBD domain is found at 178 to 451 (FSPASLPGLS…ENFVNIINGK (274 aa)).

This sequence belongs to the nuclear hormone receptor family.

It is found in the nucleus. Functionally, orphan nuclear receptor. The polypeptide is Nuclear hormone receptor family member nhr-12 (nhr-12) (Caenorhabditis elegans).